Reading from the N-terminus, the 287-residue chain is Energy-coupling factor transporter ATP-binding protein EcfA2 (287 aa).

The region spanning 3–245 (IKFENVSYVY…SEWLQKHHLA (243 aa)) is the ABC transporter domain. Position 40 to 47 (40 to 47 (GHTGSGKS)) interacts with ATP.

It belongs to the ABC transporter superfamily. Energy-coupling factor EcfA family. In terms of assembly, forms a stable energy-coupling factor (ECF) transporter complex composed of 2 membrane-embedded substrate-binding proteins (S component), 2 ATP-binding proteins (A component) and 2 transmembrane proteins (T component).

It localises to the cell membrane. Functionally, ATP-binding (A) component of a common energy-coupling factor (ECF) ABC-transporter complex. Unlike classic ABC transporters this ECF transporter provides the energy necessary to transport a number of different substrates. This Lactobacillus delbrueckii subsp. bulgaricus (strain ATCC 11842 / DSM 20081 / BCRC 10696 / JCM 1002 / NBRC 13953 / NCIMB 11778 / NCTC 12712 / WDCM 00102 / Lb 14) protein is Energy-coupling factor transporter ATP-binding protein EcfA2.